We begin with the raw amino-acid sequence, 103 residues long: Large ribosomal subunit protein bL21 (103 aa).

It belongs to the bacterial ribosomal protein bL21 family. In terms of assembly, part of the 50S ribosomal subunit. Contacts protein L20.

This protein binds to 23S rRNA in the presence of protein L20. The polypeptide is Large ribosomal subunit protein bL21 (Clostridium kluyveri (strain NBRC 12016)).